The chain runs to 297 residues: Probable endonuclease 4 (297 aa).

His69, His110, Glu145, Asp179, His182, His214, Asp227, His229, and Glu259 together coordinate Zn(2+).

Belongs to the AP endonuclease 2 family. It depends on Zn(2+) as a cofactor.

It carries out the reaction Endonucleolytic cleavage to 5'-phosphooligonucleotide end-products.. Endonuclease IV plays a role in DNA repair. It cleaves phosphodiester bonds at apurinic or apyrimidinic (AP) sites, generating a 3'-hydroxyl group and a 5'-terminal sugar phosphate. This is Probable endonuclease 4 from Bacillus velezensis (strain DSM 23117 / BGSC 10A6 / LMG 26770 / FZB42) (Bacillus amyloliquefaciens subsp. plantarum).